The sequence spans 388 residues: FBD-associated F-box protein At5g60610 (388 aa).

Residues 1 to 47 enclose the F-box domain; the sequence is MDRISGLPDELLVKIISFVPTKVAVSTSILSKRWESLWKWVPKLECD. Residues 337–388 form the FBD domain; that stretch reads NWKNIQRSVPKCLKSSLKTLEFAGYTARPEERDFLSFIFKKARCLKTSSISH.

The polypeptide is FBD-associated F-box protein At5g60610 (Arabidopsis thaliana (Mouse-ear cress)).